Here is a 322-residue protein sequence, read N- to C-terminus: Probable transcription factor KAN3 (322 aa).

The tract at residues 1-35 (MELFPSQPDLYLKISRRREEEQEKESQELQEQEVE) is disordered. Positions 17–35 (RREEEQEKESQELQEQEVE) are enriched in basic and acidic residues. One can recognise an HTH myb-type domain in the interval 161–221 (GVRAPRMRWT…HLQMYRTIKS (61 aa)). The segment at residues 192–217 (PKSVLELMDVQDLTLAHVKSHLQMYR) is a DNA-binding region (H-T-H motif). Disordered regions lie at residues 222–244 (TEKP…NSER) and 267–322 (KASS…NLSP). Composition is skewed to polar residues over residues 224-241 (KPTT…SQVN) and 299-322 (LTGT…NLSP).

Expressed in developing phloem.

It localises to the nucleus. In terms of biological role, probable transcription factor that regulates lateral organ polarity. Plays a role in lateral root formation and development. The protein is Probable transcription factor KAN3 (KAN3) of Arabidopsis thaliana (Mouse-ear cress).